We begin with the raw amino-acid sequence, 507 residues long: Protein O-glucosyltransferase 3 (507 aa).

An N-terminal signal peptide occupies residues 1-20; that stretch reads MRRLPRALLLQLRLALLVAA. The stretch at 24–134 is one Filamin repeat; the sequence is EVLVSAPRSL…VAQSPYILKG (111 aa). 2 N-linked (GlcNAc...) asparagine glycosylation sites follow: Asn61 and Asn306. Residues 504 to 507 carry the Prevents secretion from ER motif; the sequence is REEL.

The protein belongs to the KDELC family.

The protein resides in the endoplasmic reticulum lumen. The catalysed reaction is L-seryl-[EGF-like domain protein] + UDP-alpha-D-glucose = 3-O-(beta-D-glucosyl)-L-seryl-[EGF-like domain protein] + UDP + H(+). It catalyses the reaction L-seryl-[EGF-like domain protein] + UDP-alpha-D-xylose = 3-O-(beta-D-xylosyl)-L-seryl-[EGF-like domain protein] + UDP + H(+). It functions in the pathway protein modification; protein glycosylation. In terms of biological role, protein glucosyltransferase that catalyzes the transfer of glucose from UDP-glucose to a serine residue within the consensus sequence peptide C-X-N-T-X-G-S-F-X-C. Can also catalyze the transfer of xylose from UDP-xylose but less efficiently. Specifically targets extracellular EGF repeats of proteins such as NOTCH1, NOTCH3, FBN1, FBN2 and LTBP1. May regulate the transport of NOTCH1 and NOTCH3 to the plasma membrane and thereby the Notch signaling pathway. The polypeptide is Protein O-glucosyltransferase 3 (Homo sapiens (Human)).